Consider the following 372-residue polypeptide: Methylthioribose-1-phosphate isomerase 1 (372 aa).

D254 (proton donor) is an active-site residue.

The protein belongs to the eIF-2B alpha/beta/delta subunits family. MtnA subfamily.

The protein localises to the cytoplasm. It is found in the nucleus. It catalyses the reaction 5-(methylsulfanyl)-alpha-D-ribose 1-phosphate = 5-(methylsulfanyl)-D-ribulose 1-phosphate. The protein operates within amino-acid biosynthesis; L-methionine biosynthesis via salvage pathway; L-methionine from S-methyl-5-thio-alpha-D-ribose 1-phosphate: step 1/6. Catalyzes the interconversion of methylthioribose-1-phosphate (MTR-1-P) into methylthioribulose-1-phosphate (MTRu-1-P). The sequence is that of Methylthioribose-1-phosphate isomerase 1 from Trypanosoma cruzi (strain CL Brener).